The sequence spans 901 residues: Protein translocase subunit SecA (901 aa).

ATP-binding positions include Gln87, 105 to 109 (GEGKT), and Asp512. A disordered region spans residues 853–901 (QMQQLSHQTDENEAAEAIAAQTGDRKVGRNDPCPCGSGKKYKSCHGRLS). The Zn(2+) site is built by Cys885, Cys887, Cys896, and His897. The segment covering 891-901 (KKYKSCHGRLS) has biased composition (basic residues).

Belongs to the SecA family. As to quaternary structure, monomer and homodimer. Part of the essential Sec protein translocation apparatus which comprises SecA, SecYEG and auxiliary proteins SecDF-YajC and YidC. The cofactor is Zn(2+).

It is found in the cell inner membrane. The protein localises to the cytoplasm. It carries out the reaction ATP + H2O + cellular proteinSide 1 = ADP + phosphate + cellular proteinSide 2.. Its function is as follows. Part of the Sec protein translocase complex. Interacts with the SecYEG preprotein conducting channel. Has a central role in coupling the hydrolysis of ATP to the transfer of proteins into and across the cell membrane, serving both as a receptor for the preprotein-SecB complex and as an ATP-driven molecular motor driving the stepwise translocation of polypeptide chains across the membrane. The protein is Protein translocase subunit SecA of Enterobacter sp. (strain 638).